The primary structure comprises 206 residues: Ribosomal RNA large subunit methyltransferase E (206 aa).

Gly-60, Trp-62, Asp-80, Asp-96, and Asp-121 together coordinate S-adenosyl-L-methionine. Lys-161 acts as the Proton acceptor in catalysis.

The protein belongs to the class I-like SAM-binding methyltransferase superfamily. RNA methyltransferase RlmE family.

The protein localises to the cytoplasm. The catalysed reaction is uridine(2552) in 23S rRNA + S-adenosyl-L-methionine = 2'-O-methyluridine(2552) in 23S rRNA + S-adenosyl-L-homocysteine + H(+). Functionally, specifically methylates the uridine in position 2552 of 23S rRNA at the 2'-O position of the ribose in the fully assembled 50S ribosomal subunit. This chain is Ribosomal RNA large subunit methyltransferase E, found in Legionella pneumophila (strain Corby).